The primary structure comprises 800 residues: Receptor-like protein 47 (800 aa).

Residues 1–31 (MMHSSSVRRMITVKWSLCLIFCLTNSILVSA) form the signal peptide. Topologically, residues 32 to 759 (KHLCLPDQKD…QDEDKEEEDQ (728 aa)) are extracellular. N-linked (GlcNAc...) asparagine glycosylation is found at N66 and N102. LRR repeat units lie at residues 109–131 (QHLQ…SIGN), 133–156 (KRLK…LGNL), 157–179 (SYLT…SMGN), 190–213 (LSSV…NMSS), 214–238 (LSKL…LFMI), 240–262 (SLIL…NISS), 263–288 (PSNL…IFSP), 294–311 (YLDV…VSLP), 312–334 (SPIE…LRNQ), 335–358 (TSLE…LWSL), 360–383 (ELRY…VIQG), 385–406 (RELL…LLPV), 407–430 (VSMN…ICEL), 431–453 (DNLR…CFEN), 455–477 (HLYV…AISH), 479–500 (LQSF…LINC), 502–523 (DIEF…WLEL), 524–550 (LPNL…SLSF), 551–574 (SRLR…YFVG), 621–645 (FTIY…IGLL), 646–669 (KEVI…LSNL), 670–693 (SNLQ…LGKL), and 695–718 (FLEW…QIQT). The N-linked (GlcNAc...) asparagine glycan is linked to N155. N-linked (GlcNAc...) asparagine glycosylation is present at N210. N259 carries an N-linked (GlcNAc...) asparagine glycan. N-linked (GlcNAc...) asparagine glycosylation is found at N323 and N333. A glycan (N-linked (GlcNAc...) asparagine) is linked at N365. N-linked (GlcNAc...) asparagine glycans are attached at residues N442, N465, N499, and N514. N668 carries an N-linked (GlcNAc...) asparagine glycan. N700 carries an N-linked (GlcNAc...) asparagine glycan. The chain crosses the membrane as a helical span at residues 760 to 780 (VFSWIAAAIGYVPGVVCGLTI). Topologically, residues 781-800 (GHILVSHKRDWFMRIVSFFT) are cytoplasmic.

The protein belongs to the RLP family.

Its subcellular location is the cell membrane. In Arabidopsis thaliana (Mouse-ear cress), this protein is Receptor-like protein 47.